Here is a 499-residue protein sequence, read N- to C-terminus: Lysine--tRNA ligase (499 aa).

The Mg(2+) site is built by glutamate 403 and glutamate 410.

Belongs to the class-II aminoacyl-tRNA synthetase family. In terms of assembly, homodimer. The cofactor is Mg(2+).

It is found in the cytoplasm. It catalyses the reaction tRNA(Lys) + L-lysine + ATP = L-lysyl-tRNA(Lys) + AMP + diphosphate. In Campylobacter hominis (strain ATCC BAA-381 / DSM 21671 / CCUG 45161 / LMG 19568 / NCTC 13146 / CH001A), this protein is Lysine--tRNA ligase.